The following is a 444-amino-acid chain: Ribitol-5-phosphate xylosyltransferase 1 (444 aa).

Residues 1 to 9 (MRLTRTRLC) lie on the Cytoplasmic side of the membrane. The helical; Signal-anchor for type II membrane protein transmembrane segment at 10 to 30 (SLLVALYCLFSIYAAYHVFFG) threads the bilayer. The Extracellular portion of the chain corresponds to 31–444 (RRRRPLGTTS…ESSFFINNKV (414 aa)). The tract at residues 38–79 (TTSRNSRKAAAAQAKERRGREQSALESEEWNPWEGDEKNEQR) is disordered. A compositionally biased stretch (basic and acidic residues) spans 51 to 60 (AKERRGREQS).

Belongs to the RXYLT1 family. Forms a complex composed of FKTN/fukutin, FKRP and RXYLT1/TMEM5.

It is found in the golgi apparatus membrane. The catalysed reaction is 3-O-[Rib-ol-P-Rib-ol-P-3-beta-D-GalNAc-(1-&gt;3)-beta-D-GlcNAc-(1-&gt;4)-(O-6-P-alpha-D-Man)]-Thr-[protein] + UDP-alpha-D-xylose = 3-O-[beta-D-Xyl-(1-&gt;4)-Rib-ol-P-Rib-ol-P-3-beta-D-GalNAc-(1-&gt;3)-beta-D-GlcNAc-(1-&gt;4)-(O-6-P-alpha-D-Man)]-Thr-[protein] + UDP + H(+). The protein operates within protein modification; protein glycosylation. Functionally, acts as a UDP-D-xylose:ribitol-5-phosphate beta1,4-xylosyltransferase, which catalyzes the transfer of UDP-D-xylose to ribitol 5-phosphate (Rbo5P) to form the Xylbeta1-4Rbo5P linkage on O-mannosyl glycan. Participates in the biosynthesis of the phosphorylated O-mannosyl trisaccharide (N-acetylgalactosamine-beta-3-N-acetylglucosamine-beta-4-(phosphate-6-)mannose), a carbohydrate structure present in alpha-dystroglycan (DAG1), which is required for binding laminin G-like domain-containing extracellular proteins with high affinity. In Mus musculus (Mouse), this protein is Ribitol-5-phosphate xylosyltransferase 1.